Reading from the N-terminus, the 188-residue chain is GMP synthase [glutamine-hydrolyzing] subunit A (188 aa).

The region spanning 2-188 (KVAVIYFGGQ…FKNFIKICRK (187 aa)) is the Glutamine amidotransferase type-1 domain. Cys79 (nucleophile) is an active-site residue. Residues His166 and Glu168 contribute to the active site.

As to quaternary structure, heterodimer composed of a glutamine amidotransferase subunit (A) and a GMP-binding subunit (B).

The enzyme catalyses XMP + L-glutamine + ATP + H2O = GMP + L-glutamate + AMP + diphosphate + 2 H(+). It participates in purine metabolism; GMP biosynthesis; GMP from XMP (L-Gln route): step 1/1. In terms of biological role, catalyzes the synthesis of GMP from XMP. The sequence is that of GMP synthase [glutamine-hydrolyzing] subunit A from Sulfolobus acidocaldarius (strain ATCC 33909 / DSM 639 / JCM 8929 / NBRC 15157 / NCIMB 11770).